The sequence spans 131 residues: Profilin-3 (131 aa).

The cysteines at positions 13 and 115 are disulfide-linked. An Involved in PIP2 interaction motif is present at residues 81 to 97 (AVIRGKKGAGGITIKKT). Position 111 is a phosphothreonine (T111).

The protein belongs to the profilin family. Occurs in many kinds of cells as a complex with monomeric actin in a 1:1 ratio. In terms of processing, phosphorylated by MAP kinases.

It is found in the cytoplasm. It localises to the cytoskeleton. In terms of biological role, binds to actin and affects the structure of the cytoskeleton. At high concentrations, profilin prevents the polymerization of actin, whereas it enhances it at low concentrations. The sequence is that of Profilin-3 from Olea europaea (Common olive).